The primary structure comprises 783 residues: Cation/H(+) antiporter 11 (783 aa).

A run of 12 helical transmembrane segments spans residues 31–51, 61–81, 101–120, 135–155, 175–195, 205–225, 244–264, 276–295, 300–322, 360–380, 389–409, and 418–438; these read VVFGYSLPLLEIQIILIFFCI, IGVSQIVSYMIAGLILGPQLF, AALRCISVFGRLMFTFLMTV, VVIGIVSFFAPLFSLSFLNLF, VIVITQSQILLPSTTYILLEL, LALSASAINDMLGIFAMIVAT, AVIIFFLIVFFVFKPMVQWII, IYIHAVILTAFASAAYFVFF, VLGPLIIGIIIPEGPPLGSALEA, IFLTLLILVIKLVACLTLCLY, LAVSLILSYKSFVEFVLYEAV, and ATYAFLILYSLLSAGIVPMVV.

The protein belongs to the monovalent cation:proton antiporter 2 (CPA2) transporter (TC 2.A.37) family. CHX (TC 2.A.37.4) subfamily. As to expression, specifically expressed in pollen.

The protein resides in the membrane. In terms of biological role, may operate as a cation/H(+) antiporter. This Arabidopsis thaliana (Mouse-ear cress) protein is Cation/H(+) antiporter 11 (CHX11).